Consider the following 424-residue polypeptide: Testican-2 (424 aa).

The signal sequence occupies residues 1 to 22 (MRAPGCGRLVLPLLLLAAAALA). A Phosphoserine; by FAM20C modification is found at Ser-72. 5 cysteine pairs are disulfide-bonded: Cys-90-Cys-101, Cys-95-Cys-111, Cys-136-Cys-166, Cys-139-Cys-159, and Cys-148-Cys-180. Residues 130-182 (GNKDSICKPCHMAQLASVCGSDGHTYSSVCKLEQQACLSSKQLAVRCEGPCPC) enclose the Kazal-like domain. Asn-225 carries an N-linked (GlcNAc...) asparagine glycan. In terms of domain architecture, Thyroglobulin type-1 spans 310–376 (KPPCLAELER…GTRTHGSPDC (67 aa)). Intrachain disulfides connect Cys-313/Cys-337, Cys-348/Cys-355, and Cys-357/Cys-376. 2 O-linked (Xyl...) (glycosaminoglycan) serine glycosylation sites follow: Ser-383 and Ser-388. Residues 387–424 (GSGVGWEDEEEKETEEAGEEAEEEEGEAGEADDGGYIW) form a disordered region. The span at 392–424 (WEDEEEKETEEAGEEAEEEEGEAGEADDGGYIW) shows a compositional bias: acidic residues.

In terms of processing, contains chondroitin sulfate and heparan sulfate O-linked oligosaccharides. In terms of tissue distribution, highly expressed in brain. Also found in lung and testis.

The protein localises to the secreted. The protein resides in the extracellular space. It is found in the extracellular matrix. May participate in diverse steps of neurogenesis. Binds calcium. This Homo sapiens (Human) protein is Testican-2 (SPOCK2).